The sequence spans 220 residues: NADH-quinone oxidoreductase subunit I (220 aa).

2 consecutive 4Fe-4S ferredoxin-type domains span residues 71-102 (LQRL…IITH) and 112-141 (DSYT…MGNR). Positions 82, 85, 88, 92, 121, 124, 127, and 131 each coordinate [4Fe-4S] cluster. Residues 187–220 (MQATPLDYVQEPSKEESQEETPTNPESNKGDENV) are disordered.

The protein belongs to the complex I 23 kDa subunit family. As to quaternary structure, NDH-1 is composed of 14 different subunits. Subunits NuoA, H, J, K, L, M, N constitute the membrane sector of the complex. [4Fe-4S] cluster serves as cofactor.

The protein resides in the cell inner membrane. It catalyses the reaction a quinone + NADH + 5 H(+)(in) = a quinol + NAD(+) + 4 H(+)(out). Its function is as follows. NDH-1 shuttles electrons from NADH, via FMN and iron-sulfur (Fe-S) centers, to quinones in the respiratory chain. The immediate electron acceptor for the enzyme in this species is believed to be ubiquinone. Couples the redox reaction to proton translocation (for every two electrons transferred, four hydrogen ions are translocated across the cytoplasmic membrane), and thus conserves the redox energy in a proton gradient. This chain is NADH-quinone oxidoreductase subunit I, found in Helicobacter pylori (strain ATCC 700392 / 26695) (Campylobacter pylori).